The following is a 626-amino-acid chain: L-amino-acid oxidase 4 (626 aa).

Positions 1-18 (KSFFRSLVAASLVIVSYS) are cleaved as a signal peptide. Asn-54 carries N-linked (GlcNAc...) asparagine glycosylation. The FAD site is built by Gly-75, Glu-94, Ala-95, Arg-102, Met-122, and Arg-123. Residue Arg-123 participates in L-glutamate binding. Position 123 (Arg-123) interacts with L-glutamine. Arg-123 serves as a coordination point for L-lysine. Residue Arg-123 coordinates L-phenylalanine. Asn-164, Asn-193, and Asn-331 each carry an N-linked (GlcNAc...) asparagine glycan. FAD is bound at residue Val-334. Tyr-457 provides a ligand contact to L-glutamate. Tyr-457 is a binding site for L-glutamine. Tyr-457 contacts L-lysine. Tyr-457 serves as a coordination point for L-phenylalanine. Glu-551 provides a ligand contact to FAD. An L-phenylalanine-binding site is contributed by Ala-558. FAD is bound by residues Trp-559 and Val-560.

This sequence belongs to the flavin monoamine oxidase family. FIG1 subfamily. Homodimer. It depends on FAD as a cofactor. Post-translationally, out of the 4 glycosylated residues, Asn-54 is hypermannosylated. The presence of a hypermannosylated N-glycan on Asn-54 leads to adoption of a more active conformation in the absence of acid activation.

The protein resides in the secreted. The catalysed reaction is an L-alpha-amino acid + O2 + H2O = a 2-oxocarboxylate + H2O2 + NH4(+). It catalyses the reaction L-lysine + O2 + H2O = 6-amino-2-oxohexanoate + H2O2 + NH4(+). The enzyme catalyses L-glutamate + O2 + H2O = H2O2 + 2-oxoglutarate + NH4(+). It carries out the reaction L-arginine + O2 + H2O = 5-guanidino-2-oxopentanoate + H2O2 + NH4(+). The catalysed reaction is L-leucine + O2 + H2O = 4-methyl-2-oxopentanoate + H2O2 + NH4(+). It catalyses the reaction L-asparagine + O2 + H2O = 2-oxosuccinamate + H2O2 + NH4(+). The enzyme catalyses L-histidine + O2 + H2O = 3-(imidazol-5-yl)pyruvate + H2O2 + NH4(+). It carries out the reaction L-isoleucine + O2 + H2O = (S)-3-methyl-2-oxopentanoate + H2O2 + NH4(+). The catalysed reaction is L-methionine + O2 + H2O = 4-methylsulfanyl-2-oxobutanoate + H2O2 + NH4(+). It catalyses the reaction L-phenylalanine + O2 + H2O = 3-phenylpyruvate + H2O2 + NH4(+). The enzyme catalyses L-tyrosine + O2 + H2O = 3-(4-hydroxyphenyl)pyruvate + H2O2 + NH4(+). It carries out the reaction L-glutamine + O2 + H2O = 2-oxoglutaramate + H2O2 + NH4(+). The catalysed reaction is L-alanine + O2 + H2O = pyruvate + H2O2 + NH4(+). With respect to regulation, LAAO4 is activated by exposure to acidic pH, the detergent sodium dodecyl sulfate, or freezing. Functionally, catalyzes the oxidative deamination of L-amino acids with molecular oxygen to the corresponding alpha-keto acids and ammonia. L-glutamine shows the highest relative activity but LAAO4 has a broad substrate specificity, including L-amino acids with big aromatic, acidic and basic side chains. Methyl esters of these L-amino acids are also accepted, ethyl esters are converted but with lower activity, whereas D-Amino acids are not converted. No reaction is detected for small polar amino acids such as L-cysteine or L-aspartate, and very little for small, branched hydrophobic amino acids like L-valine. This Hebeloma cylindrosporum protein is L-amino-acid oxidase 4.